Here is a 331-residue protein sequence, read N- to C-terminus: Small ribosomal subunit protein uS2 (331 aa).

The protein belongs to the universal ribosomal protein uS2 family.

The protein is Small ribosomal subunit protein uS2 of Rhodopseudomonas palustris (strain BisB5).